The primary structure comprises 352 residues: MIEPDRLISAVSGRERDEQLDRAIRPLKLADYIGQPSVREQMELFIHAARGRQEALDHTLIFGPPGLGKTTLANIIAQEMGVSIKSTSGPVLERPGDLAALLTNLEAGDVLFVDEIHRLSPIVEEVLYPAMEDFQLDIMIGEGPAARSIKLDLPPFTLVGATTRAGMLTNPLRDRFGIVQRLEFYNVEDLATIVSRSAGILGLEIEPQGAAEIAKRARGTPRIANRLLRRVRDFAEVRGQGDITRVIADKALNLLDVDERGFDHLDRRLLLTMIDKFDGGPVGIDNLAAALSEERHTIEDVLEPYLIQQGYIMRTPRGRVVTRHAYLHFGLNIPKRLGPGVTTDLFTSEDGN.

The large ATPase domain (RuvB-L) stretch occupies residues 4-185; that stretch reads PDRLISAVSG…FGIVQRLEFY (182 aa). ATP is bound by residues Ile-24, Arg-25, Gly-66, Lys-69, Thr-70, Thr-71, 132–134, Arg-175, Tyr-185, and Arg-222; that span reads EDF. Thr-70 serves as a coordination point for Mg(2+). The segment at 186 to 256 is small ATPAse domain (RuvB-S); that stretch reads NVEDLATIVS…IADKALNLLD (71 aa). The tract at residues 259-352 is head domain (RuvB-H); sequence ERGFDHLDRR…TDLFTSEDGN (94 aa). DNA is bound by residues Arg-295, Arg-314, and Arg-319.

This sequence belongs to the RuvB family. In terms of assembly, homohexamer. Forms an RuvA(8)-RuvB(12)-Holliday junction (HJ) complex. HJ DNA is sandwiched between 2 RuvA tetramers; dsDNA enters through RuvA and exits via RuvB. An RuvB hexamer assembles on each DNA strand where it exits the tetramer. Each RuvB hexamer is contacted by two RuvA subunits (via domain III) on 2 adjacent RuvB subunits; this complex drives branch migration. In the full resolvosome a probable DNA-RuvA(4)-RuvB(12)-RuvC(2) complex forms which resolves the HJ.

It is found in the cytoplasm. The enzyme catalyses ATP + H2O = ADP + phosphate + H(+). The RuvA-RuvB-RuvC complex processes Holliday junction (HJ) DNA during genetic recombination and DNA repair, while the RuvA-RuvB complex plays an important role in the rescue of blocked DNA replication forks via replication fork reversal (RFR). RuvA specifically binds to HJ cruciform DNA, conferring on it an open structure. The RuvB hexamer acts as an ATP-dependent pump, pulling dsDNA into and through the RuvAB complex. RuvB forms 2 homohexamers on either side of HJ DNA bound by 1 or 2 RuvA tetramers; 4 subunits per hexamer contact DNA at a time. Coordinated motions by a converter formed by DNA-disengaged RuvB subunits stimulates ATP hydrolysis and nucleotide exchange. Immobilization of the converter enables RuvB to convert the ATP-contained energy into a lever motion, pulling 2 nucleotides of DNA out of the RuvA tetramer per ATP hydrolyzed, thus driving DNA branch migration. The RuvB motors rotate together with the DNA substrate, which together with the progressing nucleotide cycle form the mechanistic basis for DNA recombination by continuous HJ branch migration. Branch migration allows RuvC to scan DNA until it finds its consensus sequence, where it cleaves and resolves cruciform DNA. This is Holliday junction branch migration complex subunit RuvB from Pseudomonas aeruginosa (strain LESB58).